A 512-amino-acid chain; its full sequence is MADPLIPSPTNKAFFIIDLSGQKSNPIIPTEFIWNHFNGKIQSTNMKLTSDASDRNWDVKLDGARFAGGWKDFSVSHSVRDDDLLSFRHDGGMVFHVSPFGRSFSQIQLISSSTSDDDDDERTVFDDDEDDDVGDDDDNSISEDDFCSKKISSKKRARKETESSSDKSYLVAHVTPSSLLRDNMCVLSKFARSNGLDRRECEIDLRDEHEKSWTLLLRHNKKTGQAFMRGGWRSFCRNNGIKAGSICRFKLVQSGIKPVLQLCPNASSIPEGNSSKARKKRNVSEIEGDEIESENCSETIPLNQNKILTFDLKPYVFRSCQFFLPASFARENGIVEAGEVTVLNKDGIEWKSHLVNIKGRDQFYNRGCQDFFVANGVKNVGDPFTLEVIRGGPSPILKICSKVKQAASSDGHKTADRKPRMTDQAPLAEEQTDNRVEKRAQVTEEGGPSRSTRADPGNLQQKQPCSISDHVKKVKQSIVDTLTDVRRFQSELKVKEQNLEASLQEIDALGMI.

Positions Asn-11–Ser-103 form a DNA-binding region, TF-B3 1. The segment at Ser-111 to Asp-145 is disordered. Residues Ser-115–Asp-145 show a composition bias toward acidic residues. 2 DNA-binding regions (TF-B3) span residues Tyr-169–Asn-265 and Ile-307–Val-403. The disordered stretch occupies residues Ser-408–Cys-465. 2 stretches are compositionally biased toward basic and acidic residues: residues Asp-410–Met-421 and Thr-432–Val-442.

The protein resides in the nucleus. In Arabidopsis thaliana (Mouse-ear cress), this protein is Putative B3 domain-containing protein REM4 (REM4).